The sequence spans 20 residues: 44 kDa cell wall protein 2 (20 aa).

The protein resides in the secreted. It localises to the cell wall. The sequence is that of 44 kDa cell wall protein 2 from Solanum lycopersicum (Tomato).